The following is a 525-amino-acid chain: Probable metalloreductase AIM14 (525 aa).

Helical transmembrane passes span 13–33, 52–72, 82–102, 118–138, 152–172, 179–199, and 203–223; these read NIKY…YIAV, PLWL…VIHV, FGRL…RPSP, LGRL…VHFV, FLGV…LPFF, LFYT…IFHA, and VGWL…YRVL. A Ferric oxidoreductase domain is found at 82–194; it reads FGRLCYALLP…YLSAWFVAIA (113 aa). The region spanning 215-344 is the FAD-binding FR-type domain; that stretch reads GSSLLYRVLA…GGAGISFALP (130 aa). Residues 407-478 form a disordered region; the sequence is LLSEDMEMEE…YHDGRPQPAD (72 aa). Residues 410 to 438 show a composition bias toward acidic residues; the sequence is EDMEMEEIGQEDEDRERDELDDLLSEDEG. The span at 453–463 shows a compositional bias: basic and acidic residues; the sequence is GKDQDNGKREA.

It belongs to the ferric reductase (FRE) family. AIM14 subfamily.

It is found in the membrane. Its function is as follows. Probable cell surface metalloreductase. May be involved in iron or copper homeostasis. The sequence is that of Probable metalloreductase AIM14 (AIM14) from Yarrowia lipolytica (strain CLIB 122 / E 150) (Yeast).